The chain runs to 438 residues: GTPase Der (438 aa).

2 EngA-type G domains span residues 2–164 and 173–343; these read HKVA…PEDD and IRIS…EKWQ. GTP-binding positions include 8–15, 55–59, 116–119, 179–186, 226–230, and 288–291; these read GRPNVGKS, DTGGL, NKID, DTAGI, and NKWD. Residues 344-428 form the KH-like domain; that stretch reads SRIGTSELNR…PVRLKWKEKG (85 aa).

This sequence belongs to the TRAFAC class TrmE-Era-EngA-EngB-Septin-like GTPase superfamily. EngA (Der) GTPase family. Associates with the 50S ribosomal subunit.

Its function is as follows. GTPase that plays an essential role in the late steps of ribosome biogenesis. This chain is GTPase Der, found in Deinococcus radiodurans (strain ATCC 13939 / DSM 20539 / JCM 16871 / CCUG 27074 / LMG 4051 / NBRC 15346 / NCIMB 9279 / VKM B-1422 / R1).